The primary structure comprises 446 residues: MLNPSRKLVELVRILDEGGFIFSGDPVQATEALRRVDGSTEEKIIRRAEMIDRNRMLRETLERVRAGSFWLWVVAATFAFFTGFSVTYLLMDNQGLNFFLVLAGVLGMNTLMLAVWLAMLFLRVKVGRFFSSPATWFRGKDPVNQAVLRLYADEWRQPSVRWKIGATSHSLWLCTLLGMLVSVLLLLLVRQYTFNWESTLLSNAASVRAVEMLAWLPSKLGFPVPDARAVIEGRLNGNIADARAWSGLLVGSIACYGILPRLLAWVVCKILLKTSENGLDLEKPYYQAVIRRWQNKITDADTRRETVSAVSPKIILNDAPKWAVMLETEWQDGEWFEGRLAQEWLDKGVATNREQVAALETELKQKPAQLLIGVRAQTVPDRGVLRQIVRLSEAAQGGAVVQLLAEQGLSDDLSEKLEHWRNALAECGAAWLEPDRAAQEGRLKDQ.

4 helical membrane passes run 69–89 (FWLWVVAATFAFFTGFSVTYL), 98–118 (FFLVLAGVLGMNTLMLAVWLA), 169–189 (HSLWLCTLLGMLVSVLLLLLV), and 247–267 (GLLVGSIACYGILPRLLAWVV).

Its subcellular location is the membrane. This is an uncharacterized protein from Neisseria meningitidis serogroup B (strain ATCC BAA-335 / MC58).